Here is a 188-residue protein sequence, read N- to C-terminus: UPF0200 protein M164_1169 (188 aa).

15-22 (GMPGSGKS) is an ATP binding site.

The protein belongs to the UPF0200 family.

This is UPF0200 protein M164_1169 from Saccharolobus islandicus (strain M.16.4 / Kamchatka #3) (Sulfolobus islandicus).